We begin with the raw amino-acid sequence, 114 residues long: Large ribosomal subunit protein uL22 (114 aa).

Belongs to the universal ribosomal protein uL22 family. In terms of assembly, part of the 50S ribosomal subunit.

Its function is as follows. This protein binds specifically to 23S rRNA; its binding is stimulated by other ribosomal proteins, e.g. L4, L17, and L20. It is important during the early stages of 50S assembly. It makes multiple contacts with different domains of the 23S rRNA in the assembled 50S subunit and ribosome. Functionally, the globular domain of the protein is located near the polypeptide exit tunnel on the outside of the subunit, while an extended beta-hairpin is found that lines the wall of the exit tunnel in the center of the 70S ribosome. The polypeptide is Large ribosomal subunit protein uL22 (Streptococcus thermophilus (strain CNRZ 1066)).